Consider the following 259-residue polypeptide: Ras-related protein Rab-34 (259 aa).

Residue Met-1 is modified to N-acetylmethionine. Ser-62, Val-63, Gly-64, Lys-65, Thr-66, Asp-78, Tyr-81, and Thr-84 together coordinate GTP. Thr-66 lines the Mg(2+) pocket. The Switch 1 signature appears at 71-89 (RFCKDTFDKNYKATIGVDF). Thr-84 and Asp-107 together coordinate Mg(2+). The short motif at 108–127 (TAGQERFKCIASTYYRGAQA) is the Switch 2 element. Gly-110, Lys-167, Asp-169, and Ser-198 together coordinate GTP. Position 241 is a phosphoserine (Ser-241). Residues Cys-257 and Cys-258 are each lipidated (S-geranylgeranyl cysteine).

It belongs to the small GTPase superfamily. Rab family. In terms of assembly, interacts with RILP. The GTP-bound form interacts with REP15. It depends on Mg(2+) as a cofactor.

It is found in the cytoplasm. The protein localises to the golgi apparatus. Its subcellular location is the cytoplasmic vesicle. The protein resides in the phagosome. It localises to the phagosome membrane. It is found in the cell projection. The protein localises to the cilium. Its subcellular location is the cytoskeleton. The protein resides in the microtubule organizing center. It localises to the centrosome. It is found in the centriole. The enzyme catalyses GTP + H2O = GDP + phosphate + H(+). Its activity is regulated as follows. Regulated by guanine nucleotide exchange factors (GEFs) which promote the exchange of bound GDP for free GTP. Regulated by GTPase activating proteins (GAPs) which increase the GTP hydrolysis activity. Inhibited by GDP dissociation inhibitors (GDIs). In terms of biological role, the small GTPases Rab are key regulators of intracellular membrane trafficking, from the formation of transport vesicles to their fusion with membranes. Rabs cycle between an inactive GDP-bound form and an active GTP-bound form that is able to recruit to membranes different sets of downstream effectors directly responsible for vesicle formation, movement, tethering and fusion. RAB34 transports protein involved in the redistribution of lysosomes to the peri-Golgi region. Plays a role in the maturation of phagosomes that engulf pathogens, such as S.aureus and M.tuberculosis. Plays a role in the fusion of phagosomes with lysosomes. Involved in ciliogenesis. In particular, it is required for early steps of the intracellular cilium assembly pathway initiated by trafficking and docking of ciliary vesicles to the centrioles in the cytoplasm, followed by axoneme formation in the cytoplasm. After axoneme elongation, the centrioles migrate close to the cell surface so that ciliary vesicles can fuse with the plasma membrane to expose cilia to the extracellular space. It seems dispensable for ciliogenesis via the extracellular pathway where cilium assembly begins after migration and docking of the centriole to the plasma membrane. Also acts as a positive regulator of hedgehog signaling and regulates ciliary function. In Rattus norvegicus (Rat), this protein is Ras-related protein Rab-34.